An 878-amino-acid polypeptide reads, in one-letter code: Leucine--tRNA ligase (878 aa).

A 'HIGH' region motif is present at residues 56 to 66 (PYPSGKLHMGH). A 'KMSKS' region motif is present at residues 630 to 634 (KMSKS). K633 is a binding site for ATP.

It belongs to the class-I aminoacyl-tRNA synthetase family.

The protein localises to the cytoplasm. The enzyme catalyses tRNA(Leu) + L-leucine + ATP = L-leucyl-tRNA(Leu) + AMP + diphosphate. The protein is Leucine--tRNA ligase of Prochlorococcus marinus (strain MIT 9303).